Here is a 514-residue protein sequence, read N- to C-terminus: uncharacterized protein (514 aa).

Residues 1 to 15 (MSSPRGASSMSSRSP) show a composition bias toward low complexity. Positions 1–22 (MSSPRGASSMSSRSPVNLEPES) are disordered.

This is an uncharacterized protein from Ictaluridae (bullhead catfishes).